The following is a 72-amino-acid chain: Light-harvesting polypeptide B-885 alpha-1 chain (72 aa).

Topologically, residues 1–16 (SAPAQWKLWLVMDPRT) are cytoplasmic. The chain crosses the membrane as a helical span at residues 17–37 (VMIGTAAWLGVLALLIHFLLL). Residue His33 participates in a bacteriochlorophyll binding. At 38–72 (GTERFNWIDTGLKEQKATAAAQAAITPAPVTAAAK) the chain is on the periplasmic side.

It belongs to the antenna complex alpha subunit family. The core complex is formed by different alpha and beta chains, binding bacteriochlorophyll molecules, and arranged most probably in tetrameric structures disposed around the reaction center. The non-pigmented gamma chains may constitute additional components.

The protein resides in the cell inner membrane. Antenna complexes are light-harvesting systems, which transfer the excitation energy to the reaction centers. This is Light-harvesting polypeptide B-885 alpha-1 chain from Rhodocyclus tenuis (Rhodospirillum tenue).